Consider the following 259-residue polypeptide: Phosphate import ATP-binding protein PstB (259 aa).

Residues 5–248 (IEVNDLNVYY…NIIFSNPSAQ (244 aa)) enclose the ABC transporter domain. An ATP-binding site is contributed by 37–44 (GPSGCGKS).

This sequence belongs to the ABC transporter superfamily. Phosphate importer (TC 3.A.1.7) family. The complex is composed of two ATP-binding proteins (PstB), two transmembrane proteins (PstC and PstA) and a solute-binding protein (PstS).

It localises to the cell membrane. The enzyme catalyses phosphate(out) + ATP + H2O = ADP + 2 phosphate(in) + H(+). Part of the ABC transporter complex PstSACB involved in phosphate import. Responsible for energy coupling to the transport system. This Leifsonia xyli subsp. xyli (strain CTCB07) protein is Phosphate import ATP-binding protein PstB.